Here is a 309-residue protein sequence, read N- to C-terminus: D-alanine--D-alanine ligase (309 aa).

The ATP-grasp domain occupies 104–306 (KLLWQSFNLP…YQILVQKILE (203 aa)). Residue 137–192 (ISLLGLPIIVKPNQEGSSIGITIVYSYETLYKACKTAFIFDNSILIEKFIYGEEYT) coordinates ATP. Mg(2+) contacts are provided by D260, E273, and N275.

This sequence belongs to the D-alanine--D-alanine ligase family. The cofactor is Mg(2+). Mn(2+) is required as a cofactor.

It localises to the cytoplasm. The catalysed reaction is 2 D-alanine + ATP = D-alanyl-D-alanine + ADP + phosphate + H(+). It functions in the pathway cell wall biogenesis; peptidoglycan biosynthesis. In terms of biological role, cell wall formation. The chain is D-alanine--D-alanine ligase from Buchnera aphidicola subsp. Baizongia pistaciae (strain Bp).